The following is a 367-amino-acid chain: MKASPHRPTKALIHLGAIRQNIQQMGAHIPQGTLKLAVVKANAYGHGAVAVAKAIQDDVDGFCVSNIDEAIELRQAGLSKPILILGVSEIEAVALAKEYDFTLTVAGLEWIQALLDKEVDLTGLTVHLKIDSGMGRIGFREASEVEQAQDLLQQHGVRVEGIFTHFATADEESDDYFNAQLERFKTILASMKCLPELVHASNSATTLWHVETIFNAVRMGDAMYGLNPSGAVLDLPYDLIPALTLESALVHVKTVPAGACMGYGATYQADSEQVIATVPIGYADGWTRDMQNFSVLVDGQACPIVGRVSMDQITIRLPKPYPLGTKVTLIGSNGDKEITATQVATYRVTINYEVVCLLSDRIPREYY.

K40 acts as the Proton acceptor; specific for D-alanine in catalysis. K40 carries the N6-(pyridoxal phosphate)lysine modification. A substrate-binding site is contributed by R136. Catalysis depends on Y263, which acts as the Proton acceptor; specific for L-alanine. M310 serves as a coordination point for substrate.

It belongs to the alanine racemase family. Pyridoxal 5'-phosphate serves as cofactor.

It carries out the reaction L-alanine = D-alanine. The protein operates within amino-acid biosynthesis; D-alanine biosynthesis; D-alanine from L-alanine: step 1/1. Its function is as follows. Catalyzes the interconversion of L-alanine and D-alanine. May also act on other amino acids. This Streptococcus pneumoniae (strain Hungary19A-6) protein is Alanine racemase (alr).